Here is a 270-residue protein sequence, read N- to C-terminus: MKMTNKKMKKELMERLARPEWEFHYDSEKDVLRIEQKDTKKGINVSLPGVVAKWEVKKEAAIEDVVYYVTEALLAMHKEENQSGKIFPVIRSTSFPKEAEEGNPFIMTEHTAETRIYYALDSNKTYRLIDERLLQKLGLTEQQVREMALFNVRSLNYEFKQDQVAGNTFYFLNTNDGYDASRILNESLLQSMREKISGDMVVAVPHQDVLIIADIMNEIGYDIIAQMTMKFFAEGHVPITSLSFIYEDGEFEPIFILAKNRKKTNGKEKG.

It belongs to the UPF0354 family.

This Bacillus cytotoxicus (strain DSM 22905 / CIP 110041 / 391-98 / NVH 391-98) protein is UPF0354 protein Bcer98_3354.